The chain runs to 64 residues: Large ribosomal subunit protein bL33 (64 aa).

It belongs to the bacterial ribosomal protein bL33 family.

The chain is Large ribosomal subunit protein bL33 from Gloeothece citriformis (strain PCC 7424) (Cyanothece sp. (strain PCC 7424)).